We begin with the raw amino-acid sequence, 132 residues long: Holo-[acyl-carrier-protein] synthase (132 aa).

Asp-8 and Glu-57 together coordinate Mg(2+).

Belongs to the P-Pant transferase superfamily. AcpS family. It depends on Mg(2+) as a cofactor.

It localises to the cytoplasm. The enzyme catalyses apo-[ACP] + CoA = holo-[ACP] + adenosine 3',5'-bisphosphate + H(+). Its function is as follows. Transfers the 4'-phosphopantetheine moiety from coenzyme A to a Ser of acyl-carrier-protein. This is Holo-[acyl-carrier-protein] synthase from Methylobacterium nodulans (strain LMG 21967 / CNCM I-2342 / ORS 2060).